We begin with the raw amino-acid sequence, 448 residues long: Chromosomal replication initiator protein DnaA (448 aa).

The domain I, interacts with DnaA modulators stretch occupies residues 1-85 (MHDNLPQIWE…EVHIVVPSEE (85 aa)). The segment at 85–110 (ERVGDTQNINARRSNAQSPIMGNSPL) is domain II. The domain III, AAA+ region stretch occupies residues 111–327 (ILNPKYTFDT…GALIRIVAYS (217 aa)). Residues Gly-155, Gly-157, Lys-158, and Thr-159 each coordinate ATP. The interval 328-448 (SLTNSEVTVE…DAIIKELKSD (121 aa)) is domain IV, binds dsDNA.

Belongs to the DnaA family. As to quaternary structure, oligomerizes as a right-handed, spiral filament on DNA at oriC.

The protein resides in the cytoplasm. Functionally, plays an essential role in the initiation and regulation of chromosomal replication. ATP-DnaA binds to the origin of replication (oriC) to initiate formation of the DNA replication initiation complex once per cell cycle. Binds the DnaA box (a 9 base pair repeat at the origin) and separates the double-stranded (ds)DNA. Forms a right-handed helical filament on oriC DNA; dsDNA binds to the exterior of the filament while single-stranded (ss)DNA is stabiized in the filament's interior. The ATP-DnaA-oriC complex binds and stabilizes one strand of the AT-rich DNA unwinding element (DUE), permitting loading of DNA polymerase. After initiation quickly degrades to an ADP-DnaA complex that is not apt for DNA replication. Binds acidic phospholipids. In Alkaliphilus metalliredigens (strain QYMF), this protein is Chromosomal replication initiator protein DnaA.